A 96-amino-acid polypeptide reads, in one-letter code: UPF0235 protein YggU (96 aa).

Belongs to the UPF0235 family.

The protein is UPF0235 protein YggU of Salmonella newport (strain SL254).